Here is a 257-residue protein sequence, read N- to C-terminus: 1-(5-phosphoribosyl)-5-[(5-phosphoribosylamino)methylideneamino] imidazole-4-carboxamide isomerase (257 aa).

This sequence belongs to the HisA/HisF family.

Its subcellular location is the cytoplasm. It catalyses the reaction 1-(5-phospho-beta-D-ribosyl)-5-[(5-phospho-beta-D-ribosylamino)methylideneamino]imidazole-4-carboxamide = 5-[(5-phospho-1-deoxy-D-ribulos-1-ylimino)methylamino]-1-(5-phospho-beta-D-ribosyl)imidazole-4-carboxamide. The protein operates within amino-acid biosynthesis; L-histidine biosynthesis; L-histidine from 5-phospho-alpha-D-ribose 1-diphosphate: step 4/9. In Neurospora crassa (strain ATCC 24698 / 74-OR23-1A / CBS 708.71 / DSM 1257 / FGSC 987), this protein is 1-(5-phosphoribosyl)-5-[(5-phosphoribosylamino)methylideneamino] imidazole-4-carboxamide isomerase (his-7).